A 243-amino-acid polypeptide reads, in one-letter code: tRNA pseudouridine synthase A (243 aa).

Catalysis depends on Asp-54, which acts as the Nucleophile. Tyr-112 serves as a coordination point for substrate.

Belongs to the tRNA pseudouridine synthase TruA family. Homodimer.

The catalysed reaction is uridine(38/39/40) in tRNA = pseudouridine(38/39/40) in tRNA. Functionally, formation of pseudouridine at positions 38, 39 and 40 in the anticodon stem and loop of transfer RNAs. This chain is tRNA pseudouridine synthase A, found in Onion yellows phytoplasma (strain OY-M).